The primary structure comprises 23 residues: Magainin-B2 (23 aa).

As to expression, expressed by the skin glands.

The protein resides in the secreted. Has antimicrobial activity against Gram-negative bacterium E.coli ATCC 25922 (MIC=50 uM) and against fungus C.albicans ATCC 90028 (MIC=100 uM). Has no hemolytic activity against human erythrocytes even at high concentrations. This is Magainin-B2 from Xenopus borealis (Kenyan clawed frog).